The following is a 278-amino-acid chain: Leucine-rich repeat-containing protein 10 (278 aa).

LRR repeat units follow at residues 30–51 (LDRM…VCSF), 52–74 (QELV…LGQL), 76–97 (NLQI…VCTL), 98–121 (KQLC…SLLQ), 123–143 (LRTL…VCEL), 144–166 (SLLK…LQRL), 167–189 (RELR…LLHM), and 191–213 (FLEI…HLSS). The span at 239–250 (RWAEETPEPDPR) shows a compositional bias: basic and acidic residues. The segment at 239–278 (RWAEETPEPDPRKARRYALAREESQEAQLPALPPLPPTNS) is disordered. Positions 269–278 (ALPPLPPTNS) are enriched in pro residues.

The protein localises to the nucleus. In terms of biological role, may play important roles in cardiac development and/or cardiac function. The protein is Leucine-rich repeat-containing protein 10 (LRRC10) of Bos taurus (Bovine).